We begin with the raw amino-acid sequence, 313 residues long: Protein FixB (313 aa).

Residue 255–283 coordinates FAD; that stretch reads LYLAVGISGQIQHMVGANASQTIFAINKD.

It belongs to the ETF alpha-subunit/FixB family. Heterodimer of FixA and FixB.

Its pathway is amine and polyamine metabolism; carnitine metabolism. Required for anaerobic carnitine reduction. May bring reductant to CaiA. The polypeptide is Protein FixB (Escherichia coli O8 (strain IAI1)).